A 438-amino-acid polypeptide reads, in one-letter code: Gamma-glutamyl phosphate reductase (438 aa).

This sequence belongs to the gamma-glutamyl phosphate reductase family.

The protein resides in the cytoplasm. The catalysed reaction is L-glutamate 5-semialdehyde + phosphate + NADP(+) = L-glutamyl 5-phosphate + NADPH + H(+). It participates in amino-acid biosynthesis; L-proline biosynthesis; L-glutamate 5-semialdehyde from L-glutamate: step 2/2. Functionally, catalyzes the NADPH-dependent reduction of L-glutamate 5-phosphate into L-glutamate 5-semialdehyde and phosphate. The product spontaneously undergoes cyclization to form 1-pyrroline-5-carboxylate. This is Gamma-glutamyl phosphate reductase from Prochlorococcus marinus (strain NATL1A).